The chain runs to 412 residues: MPKIVVIGAGIAGVSTAYALLEQGYDVTVVERRRYAAMETSFANGGQLSASNAEVWNHWSTVLKGIKWMLRRDAPLLMNPTPSWHKYSWLLEFVSNISRYRENTIETTRLAIAARKHLFEIADREGIDFDHVRRGILHVYWDKDGFDHALKVNEMLNEGGLDRRSVTPSEFAGIEPALHGKFYGGFYTPSDSTGDIHKYCAGLEKACTKRGAQFIYDAAVTRIERRDRFNIVCATDGADQTLVADGIVVCAGTNSRDIAAMFGDRINIYPVKGYSITVELDGAAADSSAPWVSILDDRAKIVTSRLGAARLRVAGTAEFNGVNFDIREDRIRPLVDWTRMMFPKVATEHVVPWAGLRPMMPNMMPRVGKSRVPGVFYNTGHGHLGWTLSAATSAMLATVVATDLPIDARLAA.

4–18 (IVVIGAGIAGVSTAY) provides a ligand contact to FAD.

It belongs to the DadA oxidoreductase family. FAD is required as a cofactor.

The catalysed reaction is a D-alpha-amino acid + A + H2O = a 2-oxocarboxylate + AH2 + NH4(+). Oxidative deamination of D-amino acids. In Mesorhizobium japonicum (strain LMG 29417 / CECT 9101 / MAFF 303099) (Mesorhizobium loti (strain MAFF 303099)), this protein is D-amino acid dehydrogenase 3 (dadA3).